Reading from the N-terminus, the 555-residue chain is Xylulose kinase (555 aa).

Positions 88, 158, 274, and 275 each coordinate substrate. ATP contacts are provided by residues Trp357, 455–456, and Asn459; that span reads GA.

The protein belongs to the FGGY kinase family.

Its subcellular location is the cytoplasm. It catalyses the reaction D-xylulose + ATP = D-xylulose 5-phosphate + ADP + H(+). The polypeptide is Xylulose kinase (Schizosaccharomyces pombe (strain 972 / ATCC 24843) (Fission yeast)).